A 328-amino-acid chain; its full sequence is Arabinose 5-phosphate isomerase KdsD (328 aa).

In terms of domain architecture, SIS spans Cys-42–Phe-184. Substrate contacts are provided by residues Gly-75 to Thr-76, His-82, His-88, Ala-114 to His-123, Lys-148 to Ala-150, Thr-222, and Asp-275. Residue His-82 coordinates Zn(2+). A CBS 1 domain is found at Met-210 to Val-268. The 52-residue stretch at Met-277–Val-328 folds into the CBS 2 domain.

It belongs to the SIS family. GutQ/KpsF subfamily. Homotetramer.

The enzyme catalyses D-arabinose 5-phosphate = D-ribulose 5-phosphate. It functions in the pathway carbohydrate biosynthesis; 3-deoxy-D-manno-octulosonate biosynthesis; 3-deoxy-D-manno-octulosonate from D-ribulose 5-phosphate: step 1/3. The protein operates within bacterial outer membrane biogenesis; lipopolysaccharide biosynthesis. Its function is as follows. Involved in the biosynthesis of 3-deoxy-D-manno-octulosonate (KDO), a unique 8-carbon sugar component of lipopolysaccharides (LPSs). Catalyzes the reversible aldol-ketol isomerization between D-ribulose 5-phosphate (Ru5P) and D-arabinose 5-phosphate (A5P). The polypeptide is Arabinose 5-phosphate isomerase KdsD (kdsD) (Escherichia coli O157:H7).